The chain runs to 208 residues: Kinetochore protein Spc25 (208 aa).

A coiled-coil region spans residues 31 to 101; that stretch reads SKIAAKHQLI…KKQRRDELMG (71 aa).

The protein belongs to the SPC25 family. Component of the Ndc80 complex, which is composed of Ndc80, Nuf2 and Spc25.

The protein localises to the nucleus. Its subcellular location is the chromosome. It is found in the centromere. It localises to the kinetochore. Acts as a component of the essential kinetochore-associated Ndc80 complex, which is required for chromosome segregation and spindle checkpoint activity during meiosis and mitosis. Required for kinetochore integrity and the organization of stable microtubule binding sites in the outer plate of the kinetochore. Participates in SAC signaling that responds specifically to disruptions in spindle microtubule dynamics. The NDC80 complex synergistically enhances the affinity of the SKA1 complex for microtubules and may allow the NDC80 complex to track depolymerizing microtubules. The sequence is that of Kinetochore protein Spc25 from Drosophila mojavensis (Fruit fly).